Consider the following 418-residue polypeptide: Pigment epithelium-derived factor (418 aa).

The signal sequence occupies residues 1–19; that stretch reads MQALVLLLCIGALLGHSSC. A Pyrrolidone carboxylic acid modification is found at Q20. Positions 20-39 are disordered; the sequence is QNPASPPEEGSPDPDSTGAL. 2 positions are modified to phosphoserine; by CK2: S24 and S114. At S227 the chain carries Phosphoserine; by PKA. N285 is a glycosylation site (N-linked (GlcNAc...) (complex) asparagine). An O-glycosylated at one site region spans residues 371–383; the sequence is TTPSPGLQPAHLT.

The protein belongs to the serpin family. Interacts with PNPLA2; this interaction stimulates the phospholipase A2 activity of PNPLA2. The N-terminus is blocked. Extracellular phosphorylation enhances antiangiogenic activity. In terms of processing, N- and O-glycosylated. O-glycosylated with a core 1 or possibly core 8 glycan. In terms of tissue distribution, retinal pigment epithelial cells and blood plasma.

It is found in the secreted. The protein localises to the melanosome. Its function is as follows. Neurotrophic protein; induces extensive neuronal differentiation in retinoblastoma cells. Potent inhibitor of angiogenesis. As it does not undergo the S (stressed) to R (relaxed) conformational transition characteristic of active serpins, it exhibits no serine protease inhibitory activity. The sequence is that of Pigment epithelium-derived factor (SERPINF1) from Homo sapiens (Human).